The following is a 194-amino-acid chain: Peptidyl-tRNA hydrolase (194 aa).

Tyr17 is a binding site for tRNA. The active-site Proton acceptor is the His22. Residues Tyr68, Asn70, and Asn116 each contribute to the tRNA site.

Belongs to the PTH family. In terms of assembly, monomer.

The protein localises to the cytoplasm. The enzyme catalyses an N-acyl-L-alpha-aminoacyl-tRNA + H2O = an N-acyl-L-amino acid + a tRNA + H(+). In terms of biological role, hydrolyzes ribosome-free peptidyl-tRNAs (with 1 or more amino acids incorporated), which drop off the ribosome during protein synthesis, or as a result of ribosome stalling. Functionally, catalyzes the release of premature peptidyl moieties from peptidyl-tRNA molecules trapped in stalled 50S ribosomal subunits, and thus maintains levels of free tRNAs and 50S ribosomes. This Pseudomonas putida (strain GB-1) protein is Peptidyl-tRNA hydrolase.